The primary structure comprises 540 residues: Probable pectinesterase/pectinesterase inhibitor 60 (540 aa).

A signal peptide spans 1-31 (MNIMMVQNISFLSLHLLLILLLCLRPLTTVA). The interval 32-185 (DGNSTNIDGW…SHLISNCLAV (154 aa)) is pectinesterase inhibitor 60. N-linked (GlcNAc...) asparagine glycans are attached at residues N34, N91, N95, N120, N161, and N195. Residues 225-526 (NLVVAKDGSG…FSVGKFIAGT (302 aa)) form a pectinesterase 60 region. The substrate site is built by T302 and Q332. Catalysis depends on D355, which acts as the Proton donor; for pectinesterase activity. A disulfide bridge connects residues C369 and C389. The active-site Nucleophile; for pectinesterase activity is D376. 2 residues coordinate substrate: R444 and W446.

It in the N-terminal section; belongs to the PMEI family. This sequence in the C-terminal section; belongs to the pectinesterase family. As to expression, expressed in siliques.

The protein localises to the secreted. The protein resides in the cell wall. It carries out the reaction [(1-&gt;4)-alpha-D-galacturonosyl methyl ester](n) + n H2O = [(1-&gt;4)-alpha-D-galacturonosyl](n) + n methanol + n H(+). It participates in glycan metabolism; pectin degradation; 2-dehydro-3-deoxy-D-gluconate from pectin: step 1/5. In terms of biological role, acts in the modification of cell walls via demethylesterification of cell wall pectin. This is Probable pectinesterase/pectinesterase inhibitor 60 (PME60) from Arabidopsis thaliana (Mouse-ear cress).